Reading from the N-terminus, the 337-residue chain is MSLKIPGLADMHVHLRQDNMLKAVVPTVAEGGVSVAYVMPNLIPPITTVDACLQYKKEIEQLDSKTTYLMSLYLSPETTPEVIYEAAKKGIRGVKSYPKGATTNSESGVESYEPFYPTFAAMQETGMILNIHGEVPPSKDNTVFTAEPKFLPTLLDLHQRFPKLKIVLEHCTTADAVEAVKACGESVAGTITAHHLYLTQKDWQDDPYCFCKPVAKTERDRRALIEAATSKNPKFFFGSDSAPHPRSSKLKTPPAAGVFTQPFAASYLAEVFDKEGRLDALKDFACIFGRKFYCIPLDFKESNIVLKKESFRVPESVANDLVPFHPNEVLQWHCSWE.

Residues histidine 12, histidine 14, lysine 95, histidine 132, histidine 170, and aspartate 240 each coordinate Zn(2+). Lysine 95 bears the N6-carboxylysine mark.

This sequence belongs to the metallo-dependent hydrolases superfamily. DHOase family. Class II DHOase subfamily. Zn(2+) serves as cofactor.

The catalysed reaction is (S)-dihydroorotate + H2O = N-carbamoyl-L-aspartate + H(+). Its pathway is pyrimidine metabolism; UMP biosynthesis via de novo pathway; (S)-dihydroorotate from bicarbonate: step 3/3. The sequence is that of Probable dihydroorotase (ura2) from Schizosaccharomyces pombe (strain 972 / ATCC 24843) (Fission yeast).